Here is a 442-residue protein sequence, read N- to C-terminus: GTPase Der (442 aa).

2 consecutive EngA-type G domains span residues 4 to 169 and 178 to 353; these read PIVA…PENN and IKIA…EQAT. Residues 10-17, 57-61, 121-124, 184-191, 231-235, and 296-299 each bind GTP; these read GRPNVGKS, DTGGL, NKIE, DTAGM, and NKWD. The region spanning 354–438 is the KH-like domain; it reads RRISTSVLNE…PMRFFIRERE (85 aa).

It belongs to the TRAFAC class TrmE-Era-EngA-EngB-Septin-like GTPase superfamily. EngA (Der) GTPase family. Associates with the 50S ribosomal subunit.

Its function is as follows. GTPase that plays an essential role in the late steps of ribosome biogenesis. This Heliobacterium modesticaldum (strain ATCC 51547 / Ice1) protein is GTPase Der.